Here is a 342-residue protein sequence, read N- to C-terminus: Endo-1,4-beta-xylanase A (342 aa).

The 332-residue stretch at 11 to 342 folds into the GH10 domain; it reads EMLNLSLAKT…KEALYRILRF (332 aa). The active-site Proton donor is E144. E252 acts as the Nucleophile in catalysis.

Belongs to the glycosyl hydrolase 10 (cellulase F) family. Cytoplasmic xylanase subfamily.

It is found in the cytoplasm. It catalyses the reaction Endohydrolysis of (1-&gt;4)-beta-D-xylosidic linkages in xylans.. It functions in the pathway glycan degradation; xylan degradation. This chain is Endo-1,4-beta-xylanase A (xynA), found in Caldicellulosiruptor saccharolyticus (Caldocellum saccharolyticum).